Here is a 122-residue protein sequence, read N- to C-terminus: Pupal cuticle protein Edg-78E (122 aa).

The signal sequence occupies residues 1–16 (MYKYLFCLALIGCACA). In terms of domain architecture, Chitin-binding type R&amp;R spans 36–96 (EGNYQYAYET…PVGDHLPTPP (61 aa)).

Imaginal (anterior) epidermis.

In terms of biological role, component of the cuticle of the pupa of fruit fly. This chain is Pupal cuticle protein Edg-78E (Edg78E), found in Drosophila melanogaster (Fruit fly).